A 184-amino-acid polypeptide reads, in one-letter code: MSMKGKETMSKQNEKLVVGKLGSSYGIRGWLKVFSYTDNPESIFDYSPWYIDQKGEWVEYKVEGWKRHNKGWVVKLQGLDVREDAHLLTNFEIAIDPASLPELSEDEFYWRELFGMQVVTTNGYDLGVVTDMMETGSNDVLVVKANLKDAFGQKERLIPFLEEQVIKVVDRQAQRIEVDWDPAF.

One can recognise a PRC barrel domain in the interval 105-184; that stretch reads EDEFYWRELF…RIEVDWDPAF (80 aa).

It belongs to the RimM family. Binds ribosomal protein uS19.

The protein resides in the cytoplasm. Its function is as follows. An accessory protein needed during the final step in the assembly of 30S ribosomal subunit, possibly for assembly of the head region. Essential for efficient processing of 16S rRNA. May be needed both before and after RbfA during the maturation of 16S rRNA. It has affinity for free ribosomal 30S subunits but not for 70S ribosomes. This is Ribosome maturation factor RimM from Vibrio cholerae serotype O1 (strain ATCC 39541 / Classical Ogawa 395 / O395).